The sequence spans 172 residues: uncharacterized protein (172 aa).

The region spanning 3–171 (KKVAIILSNE…FNREIVKQLQ (169 aa)) is the PfpI endopeptidase domain.

Belongs to the peptidase C56 family.

This is an uncharacterized protein from Staphylococcus haemolyticus (strain JCSC1435).